The primary structure comprises 135 residues: Galectin-1 (135 aa).

Position 2 is an N-acetylalanine (Ala-2). One can recognise a Galectin domain in the interval 4–135; it reads GLVASNLNLK…DFKIKCVAFE (132 aa). 3 positions are modified to N6-acetyllysine: Lys-13, Lys-19, and Lys-29. Ser-30 is subject to Phosphoserine. A beta-D-galactoside is bound by residues 45–49, His-53, Asn-62, and 69–72; these read HFNPR and WGAE. Residue Lys-128 is modified to N6-acetyllysine.

In terms of assembly, homodimer. Binds LGALS3BP. Interacts with CD2, CD3, CD4, CD6, CD7, CD43, ALCAM and CD45. Interacts with laminin (via poly-N-acetyllactosamine). Interacts with SUSD2. Interacts with cargo receptor TMED10; the interaction mediates the translocation from the cytoplasm into the ERGIC (endoplasmic reticulum-Golgi intermediate compartment) and thereby secretion.

The protein localises to the secreted. The protein resides in the extracellular space. It localises to the extracellular matrix. It is found in the cytoplasm. Its function is as follows. Lectin that binds beta-galactoside and a wide array of complex carbohydrates. Plays a role in regulating apoptosis, cell proliferation and cell differentiation. Inhibits CD45 protein phosphatase activity and therefore the dephosphorylation of Lyn kinase. Strong inducer of T-cell apoptosis. This is Galectin-1 (LGALS1) from Sus scrofa (Pig).